We begin with the raw amino-acid sequence, 1709 residues long: Intraflagellar transport protein 122 (1709 aa).

WD repeat units lie at residues 51 to 89 and 132 to 171; these read TQHPLVTCLAISPDGHMVVSMGTDGAVMFNDSTGAALFK and SFKGTPRAIAWAPGSDWFVISTQDGDLVIMTPEGMELNSC. Residues 209-229 form a disordered region; that stretch reads TIPQTVTPSASASGRSGSGKR. The stretch at 634-673 is one WD 3 repeat; that stretch reads LHRSPIVSLDISPDRKYISVVDRSDVVSVYKFLDDSEIVL. The LRR 1 repeat unit spans residues 1231-1256; that stretch reads IEALERLRLSGNTSKEAIIIKQLIDA. The interval 1378–1404 is disordered; the sequence is LSGEDTVKASSQRSKKDNPPSLRSTIG. Residues 1414-1436 form an LRR 2 repeat; the sequence is LGSLAHIDLGINNMNIPPGISEL.

Its subcellular location is the cell projection. The protein resides in the cilium. It localises to the flagellum. The protein localises to the cytoplasm. It is found in the cytoskeleton. Its subcellular location is the flagellum axoneme. The protein resides in the flagellum basal body. Functionally, component of the intraflagellar transport complex A (IFT-A) involved in flagellar assembly. The polypeptide is Intraflagellar transport protein 122 (Giardia intestinalis (strain ATCC 50803 / WB clone C6) (Giardia lamblia)).